Consider the following 249-residue polypeptide: 5'-nucleotidase SurE (249 aa).

A divalent metal cation-binding residues include aspartate 9, aspartate 10, serine 40, and asparagine 92.

This sequence belongs to the SurE nucleotidase family. It depends on a divalent metal cation as a cofactor.

The protein localises to the cytoplasm. The catalysed reaction is a ribonucleoside 5'-phosphate + H2O = a ribonucleoside + phosphate. Its function is as follows. Nucleotidase that shows phosphatase activity on nucleoside 5'-monophosphates. The sequence is that of 5'-nucleotidase SurE from Shewanella baltica (strain OS195).